Consider the following 441-residue polypeptide: GTPase Der (441 aa).

EngA-type G domains are found at residues 3–167 and 176–351; these read PLIA…PNKT and TRIA…EQFA. GTP-binding positions include 9–16, 56–60, 119–122, 182–189, 229–233, and 294–297; these read GRPNVGKS, DTGGF, NKID, DTAGI, and NKWD. The KH-like domain occupies 352 to 436; it reads KRISTSDLNR…PMRLLFKGRE (85 aa).

It belongs to the TRAFAC class TrmE-Era-EngA-EngB-Septin-like GTPase superfamily. EngA (Der) GTPase family. Associates with the 50S ribosomal subunit.

Functionally, GTPase that plays an essential role in the late steps of ribosome biogenesis. In Geotalea daltonii (strain DSM 22248 / JCM 15807 / FRC-32) (Geobacter daltonii), this protein is GTPase Der.